We begin with the raw amino-acid sequence, 434 residues long: Adenylosuccinate synthetase (434 aa).

GTP-binding positions include 22 to 28 (GDEGKGK) and 50 to 52 (GHT). Residue aspartate 23 is the Proton acceptor of the active site. Residues aspartate 23 and glycine 50 each contribute to the Mg(2+) site. Residues 23-26 (DEGK), 48-51 (NAGH), threonine 139, arginine 153, glutamine 234, threonine 249, and arginine 313 each bind IMP. Residue histidine 51 is the Proton donor of the active site. A substrate-binding site is contributed by 309-315 (ATTGRKR). Residues arginine 315, 341 to 343 (KLD), and 423 to 425 (SVG) contribute to the GTP site.

The protein belongs to the adenylosuccinate synthetase family. As to quaternary structure, homodimer. Mg(2+) serves as cofactor.

The protein resides in the cytoplasm. The enzyme catalyses IMP + L-aspartate + GTP = N(6)-(1,2-dicarboxyethyl)-AMP + GDP + phosphate + 2 H(+). The protein operates within purine metabolism; AMP biosynthesis via de novo pathway; AMP from IMP: step 1/2. Plays an important role in the de novo pathway of purine nucleotide biosynthesis. Catalyzes the first committed step in the biosynthesis of AMP from IMP. The sequence is that of Adenylosuccinate synthetase from Chlorobium chlorochromatii (strain CaD3).